A 409-amino-acid chain; its full sequence is Broad specificity amino-acid racemase (409 aa).

Positions 1-23 (MPFSRTLLALSLGMALLQNPAFA) are cleaved as a signal peptide. The cysteines at positions 70 and 96 are disulfide-linked. The active-site Proton acceptor is lysine 74. N6-(pyridoxal phosphate)lysine is present on lysine 74. Arginine 173 is a substrate binding site. Tyrosine 300 (proton acceptor) is an active-site residue. Methionine 348 serves as a coordination point for substrate.

This sequence belongs to the alanine racemase family. Bsr subfamily. In terms of assembly, homodimer. The cofactor is pyridoxal 5'-phosphate.

The protein localises to the periplasm. The enzyme catalyses an L-alpha-amino acid = a D-alpha-amino acid. It carries out the reaction L-lysine = D-lysine. The catalysed reaction is L-arginine = D-arginine. It catalyses the reaction L-ornithine = D-ornithine. The enzyme catalyses L-alanine = D-alanine. It carries out the reaction L-methionine = D-methionine. In terms of biological role, amino-acid racemase able to utilize a broad range of substrates. Is mostly active with lysine and arginine and, to a lesser extent, with ornithine, whereas is about 10 times less active with alanine, methionine and ethionine. With phenylalanine as substrate only a trace activity is detectable, and is inactive with glutamate. Plays a key role in the catabolism of D-arginine and D-lysine, that allows P.taetrolens strain NBRC 3460 to grow on these basic D-amino acids as a sole carbon source. In Pseudomonas taetrolens, this protein is Broad specificity amino-acid racemase.